Consider the following 150-residue polypeptide: Protein A151R (150 aa).

It belongs to the asfivirus A151R family. As to quaternary structure, monomer. Homodimer. Interacts with protein B119L. Interacts with membrane protein E248R. It depends on Zn(2+) as a cofactor.

Its function is as follows. May participate in a redox cascade for the formation of disulfide bonds in viral proteins. In African swine fever virus (isolate Pig/Kenya/KEN-50/1950) (ASFV), this protein is Protein A151R.